Reading from the N-terminus, the 547-residue chain is Inositol 1,4,5-trisphosphate receptor-interacting protein-like 1 (547 aa).

The signal sequence occupies residues 1–16; the sequence is MAVISLLFLAVMYVVH. Topologically, residues 17–96 are extracellular; that stretch reads HPLMVSDRMD…PFQASGQDGG (80 aa). The stretch at 28–66 forms a coiled coil; the sequence is DTLARSRQLEKRMSEEMRQLEIEFEERSRAAEEKQKAEN. Residues 97–117 form a helical membrane-spanning segment; sequence PLGWMLGNLWNAGLFCLFLIF. At 118–547 the chain is on the cytoplasmic side; the sequence is ELLRQNMQHE…LPCSPLAGGL (430 aa).

This sequence belongs to the ITPRIP family.

It is found in the cell membrane. Functions as a ligand of CD3E, inhibiting TCR-CD3 complex signaling to regulate T cell activation. Induces stable CD3E-NCK1 binding, thereby preventing the CD3E-ZAP70 interaction and subsequently inhibiting the activation of the downstream ERK-NFkB signaling cascade and calcium influx. This Rattus norvegicus (Rat) protein is Inositol 1,4,5-trisphosphate receptor-interacting protein-like 1 (Itpripl1).